The following is a 127-amino-acid chain: Alkaline proteinase inhibitor (127 aa).

The signal sequence occupies residues 1-26 (MNINYFVRIVPVAVVLLVGISGASMA). C53 and C70 are joined by a disulfide.

Belongs to the protease inhibitor I38 family.

Its subcellular location is the periplasm. Its function is as follows. Inhibitor of the alkaline protease. The chain is Alkaline proteinase inhibitor (inh) from Pseudomonas syringae pv. tomato (strain ATCC BAA-871 / DC3000).